Reading from the N-terminus, the 550-residue chain is Hydroxylamine reductase (550 aa).

Positions 3, 6, 18, and 25 each coordinate [2Fe-2S] cluster. Positions 249, 273, 317, 405, 433, 458, 492, and 494 each coordinate hybrid [4Fe-2O-2S] cluster. Residue C405 is modified to Cysteine persulfide.

It belongs to the HCP family. The cofactor is [2Fe-2S] cluster. It depends on hybrid [4Fe-2O-2S] cluster as a cofactor.

It is found in the cytoplasm. The enzyme catalyses A + NH4(+) + H2O = hydroxylamine + AH2 + H(+). Its function is as follows. Catalyzes the reduction of hydroxylamine to form NH(3) and H(2)O. This is Hydroxylamine reductase from Pectobacterium atrosepticum (strain SCRI 1043 / ATCC BAA-672) (Erwinia carotovora subsp. atroseptica).